Here is a 139-residue protein sequence, read N- to C-terminus: ATP synthase epsilon chain 2 (139 aa).

Belongs to the ATPase epsilon chain family. As to quaternary structure, F-type ATPases have 2 components, CF(1) - the catalytic core - and CF(0) - the membrane proton channel. CF(1) has five subunits: alpha(3), beta(3), gamma(1), delta(1), epsilon(1). CF(0) has three main subunits: a, b and c.

It is found in the cell inner membrane. Its function is as follows. Produces ATP from ADP in the presence of a proton gradient across the membrane. The chain is ATP synthase epsilon chain 2 (atpC2) from Ralstonia nicotianae (strain ATCC BAA-1114 / GMI1000) (Ralstonia solanacearum).